Here is a 404-residue protein sequence, read N- to C-terminus: Cysteine desulfurase IscS (404 aa).

Residues 75–76, Asn155, Gln183, and 203–205 each bind pyridoxal 5'-phosphate; these read AT and SAH. Lys206 is modified (N6-(pyridoxal phosphate)lysine). Thr243 lines the pyridoxal 5'-phosphate pocket. Cys328 (cysteine persulfide intermediate) is an active-site residue. Cys328 is a binding site for [2Fe-2S] cluster.

It belongs to the class-V pyridoxal-phosphate-dependent aminotransferase family. NifS/IscS subfamily. In terms of assembly, homodimer. Forms a heterotetramer with IscU, interacts with other sulfur acceptors. Requires pyridoxal 5'-phosphate as cofactor.

It is found in the cytoplasm. It carries out the reaction (sulfur carrier)-H + L-cysteine = (sulfur carrier)-SH + L-alanine. It functions in the pathway cofactor biosynthesis; iron-sulfur cluster biosynthesis. Master enzyme that delivers sulfur to a number of partners involved in Fe-S cluster assembly, tRNA modification or cofactor biosynthesis. Catalyzes the removal of elemental sulfur atoms from cysteine to produce alanine. Functions as a sulfur delivery protein for Fe-S cluster synthesis onto IscU, an Fe-S scaffold assembly protein, as well as other S acceptor proteins. This is Cysteine desulfurase IscS from Neisseria gonorrhoeae (strain ATCC 700825 / FA 1090).